Reading from the N-terminus, the 499-residue chain is Thioredoxin reductase 1, cytoplasmic (499 aa).

Residues 22-23, 42-43, 58-59, and 63-67 each bind FAD; these read SG, DF, TC, and GCIPK. Cys59 and Cys64 form a disulfide bridge. Residue Lys68 is modified to N6-succinyllysine. At Tyr131 the chain carries Phosphotyrosine. FAD-binding positions include 131 to 132 and Thr161; that span reads YG. NADP(+)-binding positions include Arg166, 198-204, 221-222, Arg226, 226-228, 292-293, and Lys315; these read ASYVALE, RS, RGF, and GR. Tyr200 is a binding site for FAD. FAD contacts are provided by residues Asp334, 341 to 343, and His472; that span reads ELT. Glu341 contacts NADP(+). Residue His472 is the Proton acceptor of the active site. Residues 497–498 constitute a cross-link (cysteinyl-selenocysteine (Cys-Sec)); that stretch reads CU. Sec498 is a non-standard amino acid (selenocysteine).

Belongs to the class-I pyridine nucleotide-disulfide oxidoreductase family. Homodimer. FAD serves as cofactor. In terms of processing, ISGylated.

Its subcellular location is the cytoplasm. The catalysed reaction is [thioredoxin]-dithiol + NADP(+) = [thioredoxin]-disulfide + NADPH + H(+). The enzyme catalyses H2O2 + NADPH + H(+) = NADP(+) + 2 H2O. Functionally, reduces disulfideprotein thioredoxin (Trx) to its dithiol-containing form. Homodimeric flavoprotein involved in the regulation of cellular redox reactions, growth and differentiation. Contains a selenocysteine residue at the C-terminal active site that is essential for catalysis. Also has reductase activity on hydrogen peroxide (H2O2). In Bos taurus (Bovine), this protein is Thioredoxin reductase 1, cytoplasmic (TXNRD1).